Reading from the N-terminus, the 530-residue chain is AA9 family lytic polysaccharide monooxygenase C (530 aa).

Residues 1–18 (MQLKSTVHFLSLLAYTAA) form the signal peptide. Cu(2+)-binding residues include His19 and His103. 2 disulfide bridges follow: Cys72/Cys190 and Cys114/Cys118. Asn150 is a glycosylation site (N-linked (GlcNAc...) asparagine). Residue Gln185 coordinates O2. Tyr187 is a Cu(2+) binding site. A compositionally biased stretch (low complexity) spans 238–251 (YGSGSSSSQNSVES). Disordered regions lie at residues 238-279 (YGSG…STSA), 297-329 (ESSSALDAPKSTDAVKSVEAKETTKVEEVSSSA), 348-375 (YSSASPSSSPVLSSSKPASTSNPEKLSS), and 492-512 (GNGASAAAEPNTGTGSGGTTP). Residues 312-324 (KSVEAKETTKVEE) are compositionally biased toward basic and acidic residues. Positions 348-368 (YSSASPSSSPVLSSSKPASTS) are enriched in low complexity.

It belongs to the polysaccharide monooxygenase AA9 family. Cu(2+) serves as cofactor.

It localises to the secreted. It carries out the reaction [(1-&gt;4)-beta-D-glucosyl]n+m + reduced acceptor + O2 = 4-dehydro-beta-D-glucosyl-[(1-&gt;4)-beta-D-glucosyl]n-1 + [(1-&gt;4)-beta-D-glucosyl]m + acceptor + H2O.. Its function is as follows. Lytic polysaccharide monooxygenase (LPMO) that depolymerizes polysaccharides via the oxidation of scissile alpha- or beta-(1-4)-glycosidic bonds, yielding C1 or C4 oxidation products. Catalysis by LPMOs requires the reduction of the active-site copper from Cu(II) to Cu(I) by a reducing agent and H(2)O(2) or O(2) as a cosubstrate. Amorphous cellulose is not a suitable substrate for LPMO9C, which may act at the surface of cellulose microfibrils without any release of soluble products. The protein is AA9 family lytic polysaccharide monooxygenase C of Geotrichum candidum (Oospora lactis).